A 336-amino-acid polypeptide reads, in one-letter code: Glyceraldehyde-3-phosphate dehydrogenase (336 aa).

Residues 12 to 13 (RI), Asp34, and Met79 contribute to the NAD(+) site. Residues 150–152 (SCT), Thr181, 210–211 (TG), and Arg233 each bind D-glyceraldehyde 3-phosphate. Cys151 serves as the catalytic Nucleophile. Residue Asn316 coordinates NAD(+).

This sequence belongs to the glyceraldehyde-3-phosphate dehydrogenase family. Homotetramer.

It localises to the cytoplasm. The catalysed reaction is D-glyceraldehyde 3-phosphate + phosphate + NAD(+) = (2R)-3-phospho-glyceroyl phosphate + NADH + H(+). Its pathway is carbohydrate degradation; glycolysis; pyruvate from D-glyceraldehyde 3-phosphate: step 1/5. The polypeptide is Glyceraldehyde-3-phosphate dehydrogenase (Echinococcus multilocularis (Fox tapeworm)).